A 1018-amino-acid polypeptide reads, in one-letter code: Putative type I restriction enzyme MjaVIIIP endonuclease subunit (1018 aa).

The protein belongs to the HsdR family. In terms of assembly, the type I restriction/modification system is composed of three polypeptides R, M and S.

It carries out the reaction Endonucleolytic cleavage of DNA to give random double-stranded fragments with terminal 5'-phosphates, ATP is simultaneously hydrolyzed.. Its function is as follows. The restriction (R) subunit of a type I restriction enzyme that recognizes 5'-GAYN(5)GTAA-3' and cleaves a random distance away. The R subunit is required for both endonuclease and ATPase activities but not for modification. After locating a non-methylated recognition site, the enzyme complex serves as a molecular motor that translocates DNA in an ATP-dependent manner until a collision occurs that triggers cleavage. The protein is Putative type I restriction enzyme MjaVIIIP endonuclease subunit of Methanocaldococcus jannaschii (strain ATCC 43067 / DSM 2661 / JAL-1 / JCM 10045 / NBRC 100440) (Methanococcus jannaschii).